The following is a 98-amino-acid chain: MTKSELIDRIVTHQGLLSSKDVELAIKTMLEQMSQCLATGDRIEIRGFGSFSLHYRAPRVGRNPKTGQSVSLEGKYVPHFKPGKELRDRVNEEEHVPH.

It belongs to the bacterial histone-like protein family. In terms of assembly, heterodimer of an alpha and a beta chain.

In terms of biological role, this protein is one of the two subunits of integration host factor, a specific DNA-binding protein that functions in genetic recombination as well as in transcriptional and translational control. This Pseudomonas entomophila (strain L48) protein is Integration host factor subunit beta.